The following is a 72-amino-acid chain: Translation initiation factor IF-1 (72 aa).

Residues 1 to 72 (MAKEDCIEME…TKGRIKFRSK (72 aa)) form the S1-like domain.

The protein belongs to the IF-1 family. In terms of assembly, component of the 30S ribosomal translation pre-initiation complex which assembles on the 30S ribosome in the order IF-2 and IF-3, IF-1 and N-formylmethionyl-tRNA(fMet); mRNA recruitment can occur at any time during PIC assembly.

It is found in the cytoplasm. One of the essential components for the initiation of protein synthesis. Stabilizes the binding of IF-2 and IF-3 on the 30S subunit to which N-formylmethionyl-tRNA(fMet) subsequently binds. Helps modulate mRNA selection, yielding the 30S pre-initiation complex (PIC). Upon addition of the 50S ribosomal subunit IF-1, IF-2 and IF-3 are released leaving the mature 70S translation initiation complex. This chain is Translation initiation factor IF-1, found in Francisella tularensis subsp. novicida (strain U112).